The primary structure comprises 1175 residues: DNA ligase 3 (1175 aa).

The segment at 195 to 243 (HDFDNDNGDGDDGDGDDNDDDDGDGDSDSDKKKKKSSGGSGSDSGSKKK) is disordered. Over residues 199-221 (NDNGDGDDGDGDDNDDDDGDGDS) the composition is skewed to acidic residues. Glutamate 281 lines the ATP pocket. The active-site N6-AMP-lysine intermediate is the lysine 283. The ATP site is built by arginine 288 and arginine 303. Residues glutamate 334 and glutamate 432 each coordinate Mg(2+). Residues lysine 437, arginine 448, and lysine 452 each contribute to the ATP site. Disordered regions lie at residues 612-669 (PVGK…LKFV) and 829-869 (KSSP…KRGR). 2 stretches are compositionally biased toward low complexity: residues 622-635 (TTTT…TTTT) and 829-859 (KSSP…SSPS). Residues 883–976 (PSLPIFEDVN…KLLPLHEDYI (94 aa)) form the BRCT 1 domain. The segment at 984-1036 (PDYSQSSSSSSMSIEEEKIVVTTTSDDPSEGNQQQQDKKVIKESKIIQSKDHS) is disordered. Low complexity predominate over residues 987-996 (SQSSSSSSMS). The segment covering 1004-1018 (VTTTSDDPSEGNQQQ) has biased composition (polar residues). The span at 1019–1036 (QDKKVIKESKIIQSKDHS) shows a compositional bias: basic and acidic residues. Positions 1067–1174 (HLLSIFQECI…DLLDVKNYKL (108 aa)) constitute a BRCT 2 domain.

It belongs to the ATP-dependent DNA ligase family. The cofactor is Mg(2+).

It is found in the nucleus. The enzyme catalyses ATP + (deoxyribonucleotide)n-3'-hydroxyl + 5'-phospho-(deoxyribonucleotide)m = (deoxyribonucleotide)n+m + AMP + diphosphate.. Its function is as follows. The alpha isoform interacts with DNA-repair protein XRCC1 and can correct defective DNA strand-break repair and sister chromatid exchange following treatment with ionizing radiation and alkylating agents. The beta isoform does not interact with XRCC1 and may be specifically involved in the completion of homologous recombination events that occur during meiotic prophase. This chain is DNA ligase 3 (lig3), found in Dictyostelium discoideum (Social amoeba).